A 1247-amino-acid chain; its full sequence is Catenin delta-2 (1247 aa).

Disordered stretches follow at residues 1–50 (MFAR…TTSA), 134–238 (SGIL…SAFH), and 256–309 (LPAP…KSYS). Ser7 is modified (phosphoserine). Polar residues predominate over residues 22 to 50 (PSASEKNSSLSPGLNTSNGDGSETETTSA). Residues 49-84 (SAILASVKEQELQFERLTRELEAERQIVASQLERCK) are a coiled coil. Over residues 149 to 160 (SLLSQSALQLNS) the composition is skewed to low complexity. Residues 172 to 207 (YHSNQTLALGDTAPSQLPARSTQARAAGQSFSQGTT) show a composition bias toward polar residues. An Omega-N-methylarginine modification is found at Arg209. Residues 218-228 (PAPPPPPPREP) are compositionally biased toward pro residues. Position 261 is an omega-N-methylarginine (Arg261). Phosphoserine is present on residues Ser264 and Ser273. Polar residues predominate over residues 265 to 276 (PLTTTQGGSPTK). 2 positions are modified to omega-N-methylarginine: Arg279 and Arg293. Residues 296 to 309 (SPKQSPSRLAKSYS) are compositionally biased toward polar residues. Phosphoserine occurs at positions 324, 357, 412, and 458. Residues 391 to 433 (GSRASYSSQHGHLAPELRALQSPEHHIDPIYEDRVYQKPPMRS) form an ARM 1 repeat. A disordered region spans residues 429–480 (PPMRSLSQSQGDPLPPAHTGTFRTSTAPSSPGVDSVPLQRTGSQHGPQNAAA). The segment covering 466 to 475 (LQRTGSQHGP) has biased composition (polar residues). The residue at position 511 (Ser511) is a Phosphoserine. Tyr513 is subject to Phosphotyrosine. The disordered stretch occupies residues 514–533 (SKSGPALPPEGTLARSPSID). ARM repeat units lie at residues 537–576 (KDPR…HLCF), 579–618 (NKIK…NLVY), 623–663 (DDNK…NLSS), 679–721 (LTNA…NVSS), 725–770 (EARR…NLSY), 832–872 (PKGI…NLAA), 904–943 (VYIR…NMAL), and 997–1040 (MENA…SMWQ). Disordered regions lie at residues 1064–1131 (TIER…HTSR) and 1152–1176 (APAE…RKDY). Residues 1072-1081 (PYSSSRTPSI) are compositionally biased toward polar residues. A phosphoserine mark is found at Ser1087 and Ser1098. Over residues 1087–1100 (SPNNRSASAPASPR) the composition is skewed to low complexity. The segment covering 1103–1112 (ISLKERKTDY) has biased composition (basic and acidic residues).

It belongs to the beta-catenin family. Binds to E-cadherin at a juxtamembrane site within the cytoplasmic domain. Binds to PSEN1. Interacts with PDZD2. Interacts (via the extreme C-terminus) with FRMPD2 (via the PDZ 2 domain). Interacts with ZBTB33. Interacts with ARHGEF28. Interacts with CDK5. Interacts with CTNNB1. Interacts with GSK3A and GSK3B. Interacts with DNM2. Interacts with CCDC85B. O-glycosylated. In terms of processing, phosphorylated by CDK5. Phosphorylated by GSK3B. Expressed in neurons and glial cells. Isoform 2 was found to be the most predominant isoform in various brain regions. Expressed at neuromuscular junctions.

It localises to the nucleus. Its subcellular location is the cell junction. It is found in the adherens junction. The protein resides in the cell projection. The protein localises to the dendrite. It localises to the perikaryon. Functionally, has a critical role in neuronal development, particularly in the formation and/or maintenance of dendritic spines and synapses. Involved in the regulation of canonical Wnt signaling. It probably acts on beta-catenin turnover, facilitating beta-catenin interaction with GSK3B, phosphorylation, ubiquitination and degradation. May be involved in neuronal cell adhesion and tissue morphogenesis and integrity by regulating adhesion molecules. Functions as a transcriptional activator when bound to ZBTB33. This chain is Catenin delta-2 (Ctnnd2), found in Mus musculus (Mouse).